Reading from the N-terminus, the 475-residue chain is Gustatory and pheromone receptor 33a (475 aa).

The Cytoplasmic segment spans residues 1-34 (MIQIMNWFSMVIGLIPLNRQQSETNFILDYAMMC). A helical membrane pass occupies residues 35-55 (IVPIFYVACYLLINLSHIIGL). The Extracellular portion of the chain corresponds to 56 to 68 (CLLDSCNSVCKLS). The chain crosses the membrane as a helical span at residues 69-89 (SHLFMHLGAFLYLTITLLSLY). The Cytoplasmic portion of the chain corresponds to 90 to 128 (RRKEFFQQFDARLNDIDAVIQKCQRVAEMDKVKVTAVKH). The helical transmembrane segment at 129-149 (SVAYHFTWLFLFCVFTFALYY) threads the bilayer. Residues 150 to 158 (DVRSLYLTF) are Extracellular-facing. A helical transmembrane segment spans residues 159–179 (GNLAFIPFMVSSFPYLAGSII). Topologically, residues 180-319 (QGEFIYHVSV…LALSVITNGE (140 aa)) are cytoplasmic. Positions 243-281 (TGFGNENKFAGEMKRQEGQQKNDDDDLDTSNDEDEDDFD) are disordered. A compositionally biased stretch (basic and acidic residues) spans 251–264 (FAGEMKRQEGQQKN). The span at 265–281 (DDDDLDTSNDEDEDDFD) shows a compositional bias: acidic residues. Residues 320 to 340 (FGPQCVPYMAACFVVSIFGIF) traverse the membrane as a helical segment. Residues 341–357 (LETKVNFIVGGKSRLLD) are Extracellular-facing. The chain crosses the membrane as a helical span at residues 358 to 378 (YMTYLYVIWSFTTMMVAYIVL). The Cytoplasmic portion of the chain corresponds to 379 to 441 (RLCCNANNHS…FNGVGLFALD (63 aa)). A helical membrane pass occupies residues 442-462 (YTFIFSTVSAATSYLIVLLQF). At 463–475 (DMTAILRNEGLMS) the chain is on the extracellular side.

This sequence belongs to the insect chemoreceptor superfamily. Gustatory receptor (GR) family. Gr66a subfamily. As to expression, expressed widely in gustatory receptor neurons (GRNs) that respond to aversive chemicals. In larvae, is expressed in neurons of the terminal external chemosensory organ, and the dorsal, ventral and posterior external chemosensory organs.

The protein resides in the cell membrane. In terms of biological role, gustatory receptor which mediates acceptance or avoidance behavior, depending on its substrates. Required for sensing all nonvolatile repulsive chemicals, including tastants, pheromones, and especially N,N-Diethyl-meta-toluamide (DEET), the most widely used insect repellent worldwide. Also functions as a pheromone receptor for a male inhibitory pheromone leading to male-male courtship suppression. This chain is Gustatory and pheromone receptor 33a (Gr33a), found in Drosophila melanogaster (Fruit fly).